A 467-amino-acid chain; its full sequence is Glutamate--tRNA ligase (467 aa).

Positions 13 to 23 (PSPTGFLHLGG) match the 'HIGH' region motif. The segment covering 118–133 (ARGDKPRYDGTWRPEP) has biased composition (basic and acidic residues). The interval 118–141 (ARGDKPRYDGTWRPEPGKTLPAIP) is disordered. Residues 245 to 249 (KLSKR) carry the 'KMSKS' region motif. Lys-248 contributes to the ATP binding site.

This sequence belongs to the class-I aminoacyl-tRNA synthetase family. Glutamate--tRNA ligase type 1 subfamily. As to quaternary structure, monomer.

It is found in the cytoplasm. It carries out the reaction tRNA(Glu) + L-glutamate + ATP = L-glutamyl-tRNA(Glu) + AMP + diphosphate. Its function is as follows. Catalyzes the attachment of glutamate to tRNA(Glu) in a two-step reaction: glutamate is first activated by ATP to form Glu-AMP and then transferred to the acceptor end of tRNA(Glu). This Bordetella avium (strain 197N) protein is Glutamate--tRNA ligase.